Reading from the N-terminus, the 234-residue chain is 2-C-methyl-D-erythritol 4-phosphate cytidylyltransferase (234 aa).

It belongs to the IspD/TarI cytidylyltransferase family. IspD subfamily.

It catalyses the reaction 2-C-methyl-D-erythritol 4-phosphate + CTP + H(+) = 4-CDP-2-C-methyl-D-erythritol + diphosphate. It participates in isoprenoid biosynthesis; isopentenyl diphosphate biosynthesis via DXP pathway; isopentenyl diphosphate from 1-deoxy-D-xylulose 5-phosphate: step 2/6. Its function is as follows. Catalyzes the formation of 4-diphosphocytidyl-2-C-methyl-D-erythritol from CTP and 2-C-methyl-D-erythritol 4-phosphate (MEP). This Shewanella sediminis (strain HAW-EB3) protein is 2-C-methyl-D-erythritol 4-phosphate cytidylyltransferase.